Here is a 335-residue protein sequence, read N- to C-terminus: GTPase Obg (335 aa).

One can recognise an Obg domain in the interval 1 to 158 (MFVDQITLEL…RLVELELKLI (158 aa)). The 176-residue stretch at 159 to 334 (ADIGLVGFPN…LHDLFKSKLS (176 aa)) folds into the OBG-type G domain. GTP contacts are provided by residues 165 to 172 (GFPNAGKS), 190 to 194 (FTTLH), 215 to 218 (DIPG), 285 to 288 (NKID), and 315 to 317 (SGL). Residues Ser-172 and Thr-192 each coordinate Mg(2+).

This sequence belongs to the TRAFAC class OBG-HflX-like GTPase superfamily. OBG GTPase family. In terms of assembly, monomer. It depends on Mg(2+) as a cofactor.

It is found in the cytoplasm. In terms of biological role, an essential GTPase which binds GTP, GDP and possibly (p)ppGpp with moderate affinity, with high nucleotide exchange rates and a fairly low GTP hydrolysis rate. Plays a role in control of the cell cycle, stress response, ribosome biogenesis and in those bacteria that undergo differentiation, in morphogenesis control. The protein is GTPase Obg of Chlamydia muridarum (strain MoPn / Nigg).